The primary structure comprises 261 residues: Kallikrein 1-related peptidase b11 (261 aa).

The signal sequence occupies residues 1–18; the sequence is MWFLILFLALSLGGIDAA. The propeptide at 19–24 is activation peptide; sequence PPVQSR. Residues 25-258 form the Peptidase S1 domain; that stretch reads IVGGFNCEKN…FTNWIKDTMA (234 aa). 5 disulfide bridges follow: C31/C173, C50/C66, C152/C219, C184/C198, and C209/C234. Catalysis depends on H65, which acts as the Charge relay system. N-linked (GlcNAc...) asparagine glycosylation is present at N102. D120 (charge relay system) is an active-site residue. S213 acts as the Charge relay system in catalysis.

Belongs to the peptidase S1 family. Kallikrein subfamily.

The enzyme catalyses Preferential cleavage of Arg-|-Xaa bonds in small molecule substrates. Highly selective action to release kallidin (lysyl-bradykinin) from kininogen involves hydrolysis of Met-|-Xaa or Leu-|-Xaa.. Glandular kallikreins cleave Met-Lys and Arg-Ser bonds in kininogen to release Lys-bradykinin. The protein is Kallikrein 1-related peptidase b11 (Klk1b11) of Mus musculus (Mouse).